The following is a 696-amino-acid chain: DNA-directed RNA polymerase subunit beta' (696 aa).

Zn(2+)-binding residues include cysteine 70, cysteine 72, cysteine 85, and cysteine 88. Residues aspartate 540, aspartate 542, and aspartate 544 each contribute to the Mg(2+) site.

This sequence belongs to the RNA polymerase beta' chain family. RpoC1 subfamily. In plastids the minimal PEP RNA polymerase catalytic core is composed of four subunits: alpha, beta, beta', and beta''. When a (nuclear-encoded) sigma factor is associated with the core the holoenzyme is formed, which can initiate transcription. Requires Mg(2+) as cofactor. Zn(2+) serves as cofactor.

It is found in the plastid. The protein localises to the chloroplast. The catalysed reaction is RNA(n) + a ribonucleoside 5'-triphosphate = RNA(n+1) + diphosphate. In terms of biological role, DNA-dependent RNA polymerase catalyzes the transcription of DNA into RNA using the four ribonucleoside triphosphates as substrates. This chain is DNA-directed RNA polymerase subunit beta', found in Phaeodactylum tricornutum (strain CCAP 1055/1).